Reading from the N-terminus, the 152-residue chain is Small ribosomal subunit protein uS15 (152 aa).

The span at 1 to 11 (MAKMHTKRKGK) shows a compositional bias: basic residues. The segment at 1–23 (MAKMHTKRKGKSSSTRPIRTDPP) is disordered.

It belongs to the universal ribosomal protein uS15 family. Part of the 30S ribosomal subunit.

The protein is Small ribosomal subunit protein uS15 of Methanosarcina acetivorans (strain ATCC 35395 / DSM 2834 / JCM 12185 / C2A).